The following is a 110-amino-acid chain: Large ribosomal subunit protein uL22 (110 aa).

Belongs to the universal ribosomal protein uL22 family. In terms of assembly, part of the 50S ribosomal subunit.

In terms of biological role, this protein binds specifically to 23S rRNA; its binding is stimulated by other ribosomal proteins, e.g. L4, L17, and L20. It is important during the early stages of 50S assembly. It makes multiple contacts with different domains of the 23S rRNA in the assembled 50S subunit and ribosome. Functionally, the globular domain of the protein is located near the polypeptide exit tunnel on the outside of the subunit, while an extended beta-hairpin is found that lines the wall of the exit tunnel in the center of the 70S ribosome. This Methylococcus capsulatus (strain ATCC 33009 / NCIMB 11132 / Bath) protein is Large ribosomal subunit protein uL22.